The sequence spans 862 residues: Linoleate 9S-lipoxygenase 1 (862 aa).

In terms of domain architecture, PLAT spans Asn34–Ala161. The Lipoxygenase domain occupies Thr164–Ile862. A disordered region spans residues Gly212–Leu241. Residues His517, His522, His708, Asn712, and Ile862 each coordinate Fe cation.

The protein belongs to the lipoxygenase family. Monomer. Fe cation is required as a cofactor.

It carries out the reaction (9Z,12Z)-octadecadienoate + O2 = (9S)-hydroperoxy-(10E,12Z)-octadecadienoate. It participates in lipid metabolism; oxylipin biosynthesis. Functionally, plant lipoxygenase may be involved in a number of diverse aspects of plant physiology including growth and development, pest resistance, and senescence or responses to wounding. It catalyzes the hydroperoxidation of lipids containing a cis,cis-1,4-pentadiene structure. This Hordeum vulgare (Barley) protein is Linoleate 9S-lipoxygenase 1 (LOX1.1).